A 137-amino-acid chain; its full sequence is Ribosomal RNA large subunit methyltransferase H (137 aa).

S-adenosyl-L-methionine contacts are provided by residues leucine 56, glycine 85, and 104-109 (LSPLTL).

It belongs to the RNA methyltransferase RlmH family. As to quaternary structure, homodimer.

It localises to the cytoplasm. It carries out the reaction pseudouridine(1915) in 23S rRNA + S-adenosyl-L-methionine = N(3)-methylpseudouridine(1915) in 23S rRNA + S-adenosyl-L-homocysteine + H(+). In terms of biological role, specifically methylates the pseudouridine at position 1915 (m3Psi1915) in 23S rRNA. This chain is Ribosomal RNA large subunit methyltransferase H, found in Thermus thermophilus (strain ATCC 27634 / DSM 579 / HB8).